The primary structure comprises 224 residues: Germin-like protein 8-8 (224 aa).

Residues Met1 to Ala22 form the signal peptide. Residues Cys32 and Cys47 are joined by a disulfide bond. Positions Ala62–Asp212 constitute a Cupin type-1 domain. The N-linked (GlcNAc...) asparagine glycan is linked to Asn76. Mn(2+) contacts are provided by His109, His111, and Glu116. Asn135 is a glycosylation site (N-linked (GlcNAc...) asparagine). His157 provides a ligand contact to Mn(2+).

Belongs to the germin family. In terms of assembly, oligomer (believed to be a pentamer but probably hexamer).

It is found in the secreted. The protein localises to the extracellular space. It localises to the apoplast. Plays a role in broad-spectrum disease resistance. Probably has no oxalate oxidase activity even if the active site is conserved. This is Germin-like protein 8-8 from Oryza sativa subsp. japonica (Rice).